Here is a 278-residue protein sequence, read N- to C-terminus: MRQCQRSPIGIFDSGVGGLTVLRELYRRLPNESILYFADTARLPYGTRSAGEILQFVREIMDWMTSQQVKMVIMACNTSSALALEAIRDEFALPVLGVILPGARAAVQKGKRIGVIATPATAASNAYRQAIEEIDSTAQVWQVGCPDFVPLIEQNRLYEPYTKEVAKQYLNPLLQVNIDTLVYGCTHYRHLEPLFRQILPPSISLVDPAQYVVSAAEKELELLGLKSTLPCLPTRFCVSGNPETFANLSRQWLGYIPRVDKVYLPVKIRSSMSLEVLE.

Substrate-binding positions include 13 to 14 (DS) and 45 to 46 (YG). Residue cysteine 76 is the Proton donor/acceptor of the active site. 77–78 (NT) lines the substrate pocket. Cysteine 185 acts as the Proton donor/acceptor in catalysis. Residue 186-187 (TH) coordinates substrate.

The protein belongs to the aspartate/glutamate racemases family.

It catalyses the reaction L-glutamate = D-glutamate. It participates in cell wall biogenesis; peptidoglycan biosynthesis. Provides the (R)-glutamate required for cell wall biosynthesis. The protein is Glutamate racemase of Gloeothece citriformis (strain PCC 7424) (Cyanothece sp. (strain PCC 7424)).